The chain runs to 68 residues: HSEGTFSNDYSKYQEERMAQDFVQWLMNSXXXXXXXXHADGTYTSNVSTYLQDQAAKDFVSWLKSGRA.

Belongs to the glucagon family.

Its subcellular location is the secreted. In terms of biological role, promotes hydrolysis of glycogen and lipids, and raises the blood sugar level. The sequence is that of Glucagon-1 (gcg) from Oncorhynchus kisutch (Coho salmon).